The sequence spans 478 residues: Cysteine--tRNA ligase (478 aa).

Cys29 provides a ligand contact to Zn(2+). Residues 31-41 (VTVYDYCHLGH) carry the 'HIGH' region motif. The Zn(2+) site is built by Cys213, His238, and Glu242. The 'KMSKS' region motif lies at 270–274 (KMSKS). An ATP-binding site is contributed by Lys273.

Belongs to the class-I aminoacyl-tRNA synthetase family. Monomer. Zn(2+) serves as cofactor.

The protein localises to the cytoplasm. It catalyses the reaction tRNA(Cys) + L-cysteine + ATP = L-cysteinyl-tRNA(Cys) + AMP + diphosphate. This chain is Cysteine--tRNA ligase, found in Synechococcus sp. (strain ATCC 27144 / PCC 6301 / SAUG 1402/1) (Anacystis nidulans).